We begin with the raw amino-acid sequence, 232 residues long: MSNVDHAEIAKFEALAHRWWDRESEFKPLHDINPLRVNWIDERVNLAGKKVLDVGCGGGILSEAMAQRGATVMGIDMGEAPLAVAQLHQLESGVSVEYRQITAEALAEEMPEQFDVVTCLEMLEHVPDPSSVIRACFRMVKPGGQVFFSTINRNPKAYLFAIIGAEYIMKLLPRGTHDFKKFIRPSELGAWSRQAGLTVKDIIGLTYNPLTKHYKLASDVDVNYMIQTLREE.

Residues Arg-36, Gly-55, Asp-76, and Leu-120 each coordinate S-adenosyl-L-methionine.

Belongs to the methyltransferase superfamily. UbiG/COQ3 family.

It catalyses the reaction a 3-demethylubiquinol + S-adenosyl-L-methionine = a ubiquinol + S-adenosyl-L-homocysteine + H(+). It carries out the reaction a 3-(all-trans-polyprenyl)benzene-1,2-diol + S-adenosyl-L-methionine = a 2-methoxy-6-(all-trans-polyprenyl)phenol + S-adenosyl-L-homocysteine + H(+). Its pathway is cofactor biosynthesis; ubiquinone biosynthesis. Its function is as follows. O-methyltransferase that catalyzes the 2 O-methylation steps in the ubiquinone biosynthetic pathway. This chain is Ubiquinone biosynthesis O-methyltransferase, found in Pseudomonas fluorescens (strain SBW25).